The following is a 167-amino-acid chain: Ribosome maturation factor RimM (167 aa).

A PRC barrel domain is found at 94–165 (ENEFYYSDII…KIIITPMEGL (72 aa)).

Belongs to the RimM family. In terms of assembly, binds ribosomal protein uS19.

The protein localises to the cytoplasm. In terms of biological role, an accessory protein needed during the final step in the assembly of 30S ribosomal subunit, possibly for assembly of the head region. Essential for efficient processing of 16S rRNA. May be needed both before and after RbfA during the maturation of 16S rRNA. It has affinity for free ribosomal 30S subunits but not for 70S ribosomes. In Staphylococcus aureus (strain MRSA252), this protein is Ribosome maturation factor RimM.